A 456-amino-acid chain; its full sequence is Phospholipase A1 member A (456 aa).

An N-terminal signal peptide occupies residues 1-24 (MCPGLWGTCFWLWGSLLWLSIGRS). Residue serine 166 is the Nucleophile of the active site. Residue aspartate 190 is the Charge relay system of the active site. The cysteines at positions 245 and 258 are disulfide-linked. Catalysis depends on histidine 260, which acts as the Charge relay system. Intrachain disulfides connect cysteine 282/cysteine 293 and cysteine 296/cysteine 304. An N-linked (GlcNAc...) asparagine glycan is attached at asparagine 365.

Belongs to the AB hydrolase superfamily. Lipase family.

The protein resides in the secreted. The enzyme catalyses a 1,2-diacyl-sn-glycero-3-phospho-L-serine + H2O = a 2-acyl-sn-glycero-3-phospho-L-serine + a fatty acid + H(+). The catalysed reaction is 1,2-di-(9Z)-octadecenoyl-sn-glycero-3-phospho-L-serine + H2O = 2-(9Z-octadecenoyl)-sn-glycero-3-phospho-L-serine + (9Z)-octadecenoate + H(+). It carries out the reaction 1-hexadecanoyl-2-(5Z,8Z,11Z,14Z-eicosatetraenoyl)-sn-glycero-3-phospho-L-serine + H2O = 2-(5Z,8Z,11Z,14Z)-eicosatetraenoyl-sn-glycero-3-phospho-L-serine + hexadecanoate + H(+). It catalyses the reaction a 1-acyl-sn-glycero-3-phospho-L-serine + H2O = sn-glycero-3-phospho-L-serine + a fatty acid + H(+). The enzyme catalyses 1-(9Z-octadecenoyl)-sn-glycero-3-phospho-L-serine + H2O = sn-glycero-3-phospho-L-serine + (9Z)-octadecenoate + H(+). Functionally, hydrolyzes the ester bond of the acyl group attached at the sn-1 position of phosphatidylserines (phospholipase A1 activity) and 1-acyl-2-lysophosphatidylserines (lysophospholipase activity) in the pathway of phosphatidylserines acyl chain remodeling. Cleaves phosphatidylserines exposed on the outer leaflet of the plasma membrane of apoptotic cells producing 2-acyl-1-lysophosphatidylserines, which in turn enhance mast cell activation and histamine production. Has no activity toward other glycerophospholipids including phosphatidylcholines, phosphatidylethanolamines, phosphatidic acids or phosphatidylinositols, or glycerolipids such as triolein. The chain is Phospholipase A1 member A from Rattus norvegicus (Rat).